A 158-amino-acid polypeptide reads, in one-letter code: Transcription elongation factor GreA (158 aa).

It belongs to the GreA/GreB family.

Necessary for efficient RNA polymerase transcription elongation past template-encoded arresting sites. The arresting sites in DNA have the property of trapping a certain fraction of elongating RNA polymerases that pass through, resulting in locked ternary complexes. Cleavage of the nascent transcript by cleavage factors such as GreA or GreB allows the resumption of elongation from the new 3'terminus. GreA releases sequences of 2 to 3 nucleotides. The protein is Transcription elongation factor GreA of Psychrobacter arcticus (strain DSM 17307 / VKM B-2377 / 273-4).